The following is a 409-amino-acid chain: Protein a6 (409 aa).

Phosphoserine is present on Ser-86. Over residues 106 to 120 (RAHRTGRRQAPRRAA) the composition is skewed to basic residues. A disordered region spans residues 106–165 (RAHRTGRRQAPRRAATHSYPVTDSILITSDDEHNEQEPSSTARVRSQLSMRSPPPLAPLT). Phosphothreonine is present on Thr-133. Ser-134 is modified (phosphoserine). Over residues 142 to 155 (EPSSTARVRSQLSM) the composition is skewed to polar residues.

In Drosophila melanogaster (Fruit fly), this protein is Protein a6 (a6).